A 1108-amino-acid chain; its full sequence is Isoleucine--tRNA ligase (1108 aa).

Positions proline 53–histidine 63 match the 'HIGH' region motif. The short motif at lysine 654–arginine 658 is the 'KMSKS' region element. Lysine 657 is a binding site for ATP.

Belongs to the class-I aminoacyl-tRNA synthetase family. IleS type 2 subfamily. As to quaternary structure, monomer. Zn(2+) serves as cofactor.

It localises to the cytoplasm. The catalysed reaction is tRNA(Ile) + L-isoleucine + ATP = L-isoleucyl-tRNA(Ile) + AMP + diphosphate. Functionally, catalyzes the attachment of isoleucine to tRNA(Ile). As IleRS can inadvertently accommodate and process structurally similar amino acids such as valine, to avoid such errors it has two additional distinct tRNA(Ile)-dependent editing activities. One activity is designated as 'pretransfer' editing and involves the hydrolysis of activated Val-AMP. The other activity is designated 'posttransfer' editing and involves deacylation of mischarged Val-tRNA(Ile). The sequence is that of Isoleucine--tRNA ligase from Rickettsia bellii (strain OSU 85-389).